Consider the following 291-residue polypeptide: Phosphoribulokinase (291 aa).

12–20 (GSSGAGTTS) serves as a coordination point for ATP.

The protein belongs to the phosphoribulokinase family. As to quaternary structure, homooctamer.

The catalysed reaction is D-ribulose 5-phosphate + ATP = D-ribulose 1,5-bisphosphate + ADP + H(+). It participates in carbohydrate biosynthesis; Calvin cycle. This is Phosphoribulokinase (cbbP) from Xanthobacter flavus.